Reading from the N-terminus, the 581-residue chain is Protein phosphatase 2C 70 (581 aa).

Topologically, residues 1–7 (MAMIGMN) are extracellular. Residues 8–28 (IIGLFMVLMLLLISLIILFAC) form a helical membrane-spanning segment. Residues 29–581 (KPWRYFSRFR…IIYLDFDTSL (553 aa)) lie on the Cytoplasmic side of the membrane. The FHA domain occupies 208–259 (VKLGRVSPSDLALKDSEVSGKHAQITWNSTKFKWELVDMGSLNGTLVNSHSI). Positions 304–577 (KIGVASDPMA…DNTSIIYLDF (274 aa)) constitute a PPM-type phosphatase domain. Mn(2+) is bound by residues Asp-346, Gly-347, Asp-521, and Asp-568.

In terms of assembly, association of RLK5 with kapp domain is dependent on phosphorylation of RLK5 and can be abolished by dephosphorylation. Interacts with SERK1 and CDC48A. Component of the SERK1 signaling complex, composed of KAPP, CDC48A, GRF6 or GRF7, SERK1, SERK2, SERK3/BAK1 and BRI1. Interacts with CLV1. It depends on Mg(2+) as a cofactor. Requires Mn(2+) as cofactor. Expressed in all tissues examined.

It localises to the cell membrane. The enzyme catalyses O-phospho-L-seryl-[protein] + H2O = L-seryl-[protein] + phosphate. The catalysed reaction is O-phospho-L-threonyl-[protein] + H2O = L-threonyl-[protein] + phosphate. Dephosphorylates the Ser/Thr receptor-like kinase RLK5. May function as a signaling component in a pathway involving RLK5. Binds and dephosphorylates CLAVATA1 (CLV1). Functions as a negative regulator of the CLV1 signaling in plant development. Dephosphorylates SERK1 receptor kinase on threonine residues in the A-loop. Dephosphorylation of SERK1 controls SERK1 internalization. Component of a signaling pathway which mediates adaptation to NaCl stress. Is not a component of the SALT OVERLY SENSITIVE (SOS) pathway. The sequence is that of Protein phosphatase 2C 70 from Arabidopsis thaliana (Mouse-ear cress).